The sequence spans 203 residues: ATP-dependent Clp protease proteolytic subunit (203 aa).

S107 serves as the catalytic Nucleophile. Residue H132 is part of the active site.

Belongs to the peptidase S14 family. In terms of assembly, fourteen ClpP subunits assemble into 2 heptameric rings which stack back to back to give a disk-like structure with a central cavity, resembling the structure of eukaryotic proteasomes.

The protein localises to the cytoplasm. The catalysed reaction is Hydrolysis of proteins to small peptides in the presence of ATP and magnesium. alpha-casein is the usual test substrate. In the absence of ATP, only oligopeptides shorter than five residues are hydrolyzed (such as succinyl-Leu-Tyr-|-NHMec, and Leu-Tyr-Leu-|-Tyr-Trp, in which cleavage of the -Tyr-|-Leu- and -Tyr-|-Trp bonds also occurs).. Its function is as follows. Cleaves peptides in various proteins in a process that requires ATP hydrolysis. Has a chymotrypsin-like activity. Plays a major role in the degradation of misfolded proteins. This is ATP-dependent Clp protease proteolytic subunit from Shewanella loihica (strain ATCC BAA-1088 / PV-4).